Here is a 549-residue protein sequence, read N- to C-terminus: Zinc finger protein 18 (549 aa).

The 83-residue stretch at 41–123 folds into the SCAN box domain; that stretch reads RQLFRQFRYQ…TLVESLKGDP (83 aa). The KRAB domain occupies 211 to 283; it reads DLGASLLPAA…YLHVNEKIPR (73 aa). 5 C2H2-type zinc fingers span residues 408–430, 436–458, 464–486, 492–514, and 520–542; these read PTCRECGKTFYRNSQLIFHQRTH, FQCTICKKAFLRSSDFVKHQRTH, CKCDYCGKGFSDFSGLRHHEKIH, YKCPICEKSFIQRSNFNRHQRVH, and YKCSHCGKSFSWSSSLDKHQRSH.

This sequence belongs to the krueppel C2H2-type zinc-finger protein family.

The protein localises to the nucleus. In terms of biological role, may be involved in transcriptional regulation. This is Zinc finger protein 18 (ZNF18) from Homo sapiens (Human).